The chain runs to 117 residues: Large ribosomal subunit protein uL18 (117 aa).

The protein belongs to the universal ribosomal protein uL18 family. Part of the 50S ribosomal subunit; part of the 5S rRNA/L5/L18/L25 subcomplex. Contacts the 5S and 23S rRNAs.

In terms of biological role, this is one of the proteins that bind and probably mediate the attachment of the 5S RNA into the large ribosomal subunit, where it forms part of the central protuberance. The protein is Large ribosomal subunit protein uL18 of Blochmanniella floridana.